Reading from the N-terminus, the 181-residue chain is Peptide deformylase (181 aa).

The Fe cation site is built by Cys-104 and His-146. Glu-147 is a catalytic residue. His-150 is a binding site for Fe cation.

It belongs to the polypeptide deformylase family. Requires Fe(2+) as cofactor.

The enzyme catalyses N-terminal N-formyl-L-methionyl-[peptide] + H2O = N-terminal L-methionyl-[peptide] + formate. In terms of biological role, removes the formyl group from the N-terminal Met of newly synthesized proteins. Requires at least a dipeptide for an efficient rate of reaction. N-terminal L-methionine is a prerequisite for activity but the enzyme has broad specificity at other positions. The protein is Peptide deformylase of Helicobacter hepaticus (strain ATCC 51449 / 3B1).